The primary structure comprises 175 residues: Type II restriction enzyme NgoBV (175 aa).

It carries out the reaction Endonucleolytic cleavage of DNA to give specific double-stranded fragments with terminal 5'-phosphates.. Its function is as follows. A P subtype restriction enzyme that recognizes the double-stranded sequence 5'-GGNNCC-3'; the cleavage site is unknown. The protein is Type II restriction enzyme NgoBV (ngoBVR) of Neisseria gonorrhoeae.